The sequence spans 61 residues: UPF0370 protein Spro_3503 (61 aa).

A helical transmembrane segment spans residues 3 to 23; the sequence is WLADYWWIILLILVGMIISGI. Basic and acidic residues predominate over residues 38-48; sequence KPELPPHRDNN. The interval 38-61 is disordered; that stretch reads KPELPPHRDNNAEWDDDDDWPKKK. Acidic residues predominate over residues 49 to 61; the sequence is AEWDDDDDWPKKK.

This sequence belongs to the UPF0370 family.

Its subcellular location is the cell membrane. The protein is UPF0370 protein Spro_3503 of Serratia proteamaculans (strain 568).